We begin with the raw amino-acid sequence, 158 residues long: Large ribosomal subunit protein uL15 (158 aa).

Positions 1-13 (MKLNEIKDNEGST) are enriched in basic and acidic residues. The tract at residues 1 to 45 (MKLNEIKDNEGSTHSRKRLGRGIGSGSGKTGGRGVKGQKSRSGVA) is disordered. The span at 21 to 35 (RGIGSGSGKTGGRGV) shows a compositional bias: gly residues.

This sequence belongs to the universal ribosomal protein uL15 family. As to quaternary structure, part of the 50S ribosomal subunit.

In terms of biological role, binds to the 23S rRNA. The chain is Large ribosomal subunit protein uL15 from Rhizobium etli (strain CIAT 652).